We begin with the raw amino-acid sequence, 268 residues long: Cytolethal distending toxin subunit A (268 aa).

The N-terminal stretch at 1-19 (MQKIIVFILCCFMTFFLYA) is a signal peptide. Cysteine 20 is lipidated: N-palmitoyl cysteine. A lipid anchor (S-diacylglycerol cysteine) is attached at cysteine 20. Residues 112–252 (VSDFLTILGP…DNFDQQWFLT (141 aa)) form the Ricin B-type lectin domain. The segment at 129–140 (WALAQGNWIWGY) is mediates binding to target cells.

Heterotrimer of 3 subunits, CdtA, CdtB and CdtC.

It localises to the cell outer membrane. CDTs are cytotoxins which induce cell distension, growth arrest in G2/M phase, nucleus swelling, and chromatin fragmentation in HeLa cells. This Campylobacter jejuni subsp. jejuni serotype O:2 (strain ATCC 700819 / NCTC 11168) protein is Cytolethal distending toxin subunit A (cdtA).